Consider the following 312-residue polypeptide: Deoxycytidylate deaminase (312 aa).

Residues Ser162–Leu291 enclose the CMP/dCMP-type deaminase domain. His233 serves as a coordination point for Zn(2+). The Proton donor role is filled by Glu235. Zn(2+) contacts are provided by Cys260 and Cys263.

It belongs to the cytidine and deoxycytidylate deaminase family. Requires Zn(2+) as cofactor.

The catalysed reaction is dCMP + H2O + H(+) = dUMP + NH4(+). With respect to regulation, allosteric enzyme whose activity is greatly influenced by the end products of its metabolic pathway, dCTP and dTTP. Catalyzes the hydrolytic deamination of dCMP to yield dUMP, the nucleotide substrate for thymidylate synthetase. The chain is Deoxycytidylate deaminase from Saccharomyces cerevisiae (strain ATCC 204508 / S288c) (Baker's yeast).